Consider the following 282-residue polypeptide: UPF0294 protein VIBHAR_03217 (282 aa).

The protein belongs to the UPF0294 family.

It localises to the cytoplasm. The sequence is that of UPF0294 protein VIBHAR_03217 from Vibrio campbellii (strain ATCC BAA-1116).